A 152-amino-acid polypeptide reads, in one-letter code: 6,7-dimethyl-8-ribityllumazine synthase (152 aa).

Residues Phe-21, Ala-55–Glu-57, and Cys-79–Ile-81 each bind 5-amino-6-(D-ribitylamino)uracil. (2S)-2-hydroxy-3-oxobutyl phosphate is bound at residue Ser-84–Thr-85. Residue His-87 is the Proton donor of the active site. Phe-112 contacts 5-amino-6-(D-ribitylamino)uracil. Arg-126 contacts (2S)-2-hydroxy-3-oxobutyl phosphate.

Belongs to the DMRL synthase family. In terms of assembly, forms an icosahedral capsid composed of 60 subunits, arranged as a dodecamer of pentamers.

It catalyses the reaction (2S)-2-hydroxy-3-oxobutyl phosphate + 5-amino-6-(D-ribitylamino)uracil = 6,7-dimethyl-8-(1-D-ribityl)lumazine + phosphate + 2 H2O + H(+). The protein operates within cofactor biosynthesis; riboflavin biosynthesis; riboflavin from 2-hydroxy-3-oxobutyl phosphate and 5-amino-6-(D-ribitylamino)uracil: step 1/2. Its function is as follows. Catalyzes the formation of 6,7-dimethyl-8-ribityllumazine by condensation of 5-amino-6-(D-ribitylamino)uracil with 3,4-dihydroxy-2-butanone 4-phosphate. This is the penultimate step in the biosynthesis of riboflavin. This chain is 6,7-dimethyl-8-ribityllumazine synthase, found in Staphylococcus saprophyticus subsp. saprophyticus (strain ATCC 15305 / DSM 20229 / NCIMB 8711 / NCTC 7292 / S-41).